The chain runs to 152 residues: Snaclec coagulation factor IX/factor X-binding protein subunit A (152 aa).

Positions Met-1 to Ala-23 are cleaved as a signal peptide. Cystine bridges form between Cys-25–Cys-36, Cys-53–Cys-150, and Cys-125–Cys-142. The C-type lectin domain occupies Tyr-32–Glu-151. Ca(2+)-binding residues include Ser-64, Glu-66, and Glu-70. Residue Glu-151 participates in Ca(2+) binding.

The protein belongs to the snaclec family. As to quaternary structure, heterodimer of subunits A and B; disulfide-linked. Expressed by the venom gland.

The protein localises to the secreted. Functionally, anticoagulant protein which binds to the gamma-carboxyglutamic acid-domain regions of factors IX (F9) and factor X (F10) in the presence of calcium with a 1 to 1 stoichiometry. The sequence is that of Snaclec coagulation factor IX/factor X-binding protein subunit A from Gloydius halys (Chinese water mocassin).